The sequence spans 242 residues: Probable transcriptional regulatory protein XCV3282 (242 aa).

The protein belongs to the TACO1 family.

It is found in the cytoplasm. In Xanthomonas euvesicatoria pv. vesicatoria (strain 85-10) (Xanthomonas campestris pv. vesicatoria), this protein is Probable transcriptional regulatory protein XCV3282.